We begin with the raw amino-acid sequence, 188 residues long: Probable manganese efflux pump MntP (188 aa).

Helical transmembrane passes span 3–23 (FTAT…ASIG), 41–61 (LIFG…GILA), 66–86 (LEWN…RMII), 106–128 (WLLV…GLAF), 143–163 (ATLI…PMLG), and 168–188 (ILGG…HFHG).

It belongs to the MntP (TC 9.B.29) family.

The protein resides in the cell inner membrane. Functionally, probably functions as a manganese efflux pump. This Salmonella typhimurium (strain LT2 / SGSC1412 / ATCC 700720) protein is Probable manganese efflux pump MntP.